We begin with the raw amino-acid sequence, 438 residues long: UDP-N-acetylmuramoylalanine--D-glutamate ligase (438 aa).

112-118 (GSNGKST) is a binding site for ATP.

The protein belongs to the MurCDEF family.

The protein resides in the cytoplasm. The catalysed reaction is UDP-N-acetyl-alpha-D-muramoyl-L-alanine + D-glutamate + ATP = UDP-N-acetyl-alpha-D-muramoyl-L-alanyl-D-glutamate + ADP + phosphate + H(+). It functions in the pathway cell wall biogenesis; peptidoglycan biosynthesis. Its function is as follows. Cell wall formation. Catalyzes the addition of glutamate to the nucleotide precursor UDP-N-acetylmuramoyl-L-alanine (UMA). This chain is UDP-N-acetylmuramoylalanine--D-glutamate ligase, found in Salmonella typhimurium (strain LT2 / SGSC1412 / ATCC 700720).